The following is a 1432-amino-acid chain: MDDGNENNENAQHDEYDEEEIEIPIDEIIIEEVDDDHLLEGEGEFQIITQPSNNNNNSNNNNFGDIYVSNPNTPRNNNNNNNNNNNNNNNNNNNNNNNSNNSFNNNKKNEVSIGISENTNENNNKNNNNNNNNNDDYNDGADERVKTEEEIKKEAENELNQSVPFLSLFRFADNTDKVLMFLGTIAAVINGAAMPTVSLVFGLVVDAFKPTQFNDDPNYDIYDTVRSISFYLLMLGGGVFVLSYLETTLWMIAGERQTSRIRREYLESTLRQEIGWFDTNKANELSSRINSDTVLFEEAIGEKVGRFIHFFSTFVAGFVIGFTKGWQLTLVITSVSPLLAIGGFFTAKMMTQMTKLGQEAYSRAGGVAEENIGSIRTVATFSGEKLAIDKYSNNLKDARTVGYKRSFFNGLGLGFVQFVILGTYALAFWYGSTLISNKVTNSVSDRPWTGGDVVSVFFAVIIGATSIGQASPCLALFAQGRGAAYKIFQVIDRQSKANPFSTRGIKPETLSGEIEFKDVGFHYPSRPDVPIFNGFNLKIKPGQTVGLVGDSGGGKSTIISLLERFYDPCQGEILLDGEDIRKFNVRGLRQKIGLVNQEPVLFATTISENIRYGKEGATQDEIEEAAKLANAHSFISQLPQGYNTLVGEKGVQMSGGQRQRIAIARAVIKNPNILLLDESTSALDAESTKLVQEALDVLMKGRTTIVIAHNLSTIRNADVIIYIKKGVAVERGTHDELMAKQGLYFDLVEKQSHQQMYNLLENGTRSRRSSTFSAEVNPLLDSFHVSKRSLRKNESESNKKDKEDSNNKKKKKSNKKKVEEVPMSRVVKYNRPELGLWCFGFLSAVGTGAVYPGFAMVFTEMLTIFQNPDPNYLTDHANFVALMFVALAVGAGISNFFQGFLFSVIGEKLTYRLRRDCFAAIMRQDVGWFDLPENSTGKLTSHLATDAALVQGMTSQRLGIVLQNILTMVGGLVIAFYSGWQLTLVIIACFPLVVITSKVQMQILAGFSSKDGCGPAGQVASEAISGIRTVASFTTEKQVVELYKKQQKGPSSEGIKKAHISGFAFGFTQLILFCVYCLSFWYGGKLVGSGVFGATDKEISDNCTPQTIPYLWKDYDTCERAQNTIYGFNSMTRVFFAIVMSAIGVGQASSFAPDLAKAKAAAVSVFKLLDTPSKIDPTTEDGDRIDIVGGDIEFKNLHFSYPTRPDNSVFRGFTLTLQSGTTTALVGDSGGGKSTCLSLLQRFYNPVVGEIFIDGHNIKNLNVRHLRHLFGLVGQEPTLFSGTIADNIRYGKHDATQEEIEEASKLSNSHSFIIDLPNGYNTELGEKYTQLSGGQKQRIAIARAIIRNPKILLLDESTSALDADSTKLVQEALENVMKGRTTIVIAHNLLTIQNADCIAYVRAGQIIERGTHDELLEAEGPYSQLWYNQQQK.

2 disordered regions span residues 1–21 (MDDGNENNENAQHDEYDEEEI) and 48–149 (ITQP…KTEE). 3 stretches are compositionally biased toward low complexity: residues 52-62 (SNNNNNSNNNN), 76-106 (NNNNNNNNNNNNNNNNNNNNNNNSNNSFNNN), and 118-135 (NTNENNNKNNNNNNNNND). Residues 117–163 (ENTNENNNKNNNNNNNNNDDYNDGADERVKTEEEIKKEAENELNQSV) adopt a coiled-coil conformation. The 300-residue stretch at 180–479 (MFLGTIAAVI…ASPCLALFAQ (300 aa)) folds into the ABC transmembrane type-1 1 domain. 6 consecutive transmembrane segments (helical) span residues 185 to 205 (IAAVINGAAMPTVSLVFGLVV), 232 to 252 (LLMLGGGVFVLSYLETTLWMI), 303 to 323 (KVGRFIHFFSTFVAGFVIGFT), 325 to 345 (GWQLTLVITSVSPLLAIGGFF), 410 to 430 (GLGLGFVQFVILGTYALAFWY), and 457 to 477 (FFAVIIGATSIGQASPCLALF). The ABC transporter 1 domain occupies 514–750 (IEFKDVGFHY…QGLYFDLVEK (237 aa)). An ATP-binding site is contributed by 549–556 (GDSGGGKS). A disordered region spans residues 787 to 819 (KRSLRKNESESNKKDKEDSNNKKKKKSNKKKVE). Over residues 791-807 (RKNESESNKKDKEDSNN) the composition is skewed to basic and acidic residues. One can recognise an ABC transmembrane type-1 2 domain in the interval 837 to 1157 (WCFGFLSAVG…ASSFAPDLAK (321 aa)). The next 6 helical transmembrane spans lie at 838–858 (CFGFLSAVGTGAVYPGFAMVF), 882–902 (LMFVALAVGAGISNFFQGFLF), 968–988 (MVGGLVIAFYSGWQLTLVIIA), 989–1009 (CFPLVVITSKVQMQILAGFSS), 1060–1080 (ISGFAFGFTQLILFCVYCLSF), and 1134–1154 (VFFAIVMSAIGVGQASSFAPD). Residues 1192 to 1428 (IEFKNLHFSY…EGPYSQLWYN (237 aa)) enclose the ABC transporter 2 domain. Residue 1227 to 1234 (GDSGGGKS) coordinates ATP.

This sequence belongs to the ABC transporter superfamily. ABCB family. Multidrug resistance exporter (TC 3.A.1.201) subfamily.

Its subcellular location is the membrane. The chain is ABC transporter B family member 3 (abcB3) from Dictyostelium discoideum (Social amoeba).